The sequence spans 270 residues: Putative pyruvate, phosphate dikinase regulatory protein 2 (270 aa).

151-158 contributes to the ADP binding site; that stretch reads GVSRTSKT.

Belongs to the pyruvate, phosphate/water dikinase regulatory protein family. PDRP subfamily.

The enzyme catalyses N(tele)-phospho-L-histidyl/L-threonyl-[pyruvate, phosphate dikinase] + ADP = N(tele)-phospho-L-histidyl/O-phospho-L-threonyl-[pyruvate, phosphate dikinase] + AMP + H(+). The catalysed reaction is N(tele)-phospho-L-histidyl/O-phospho-L-threonyl-[pyruvate, phosphate dikinase] + phosphate + H(+) = N(tele)-phospho-L-histidyl/L-threonyl-[pyruvate, phosphate dikinase] + diphosphate. Bifunctional serine/threonine kinase and phosphorylase involved in the regulation of the pyruvate, phosphate dikinase (PPDK) by catalyzing its phosphorylation/dephosphorylation. This is Putative pyruvate, phosphate dikinase regulatory protein 2 from Listeria monocytogenes serovar 1/2a (strain ATCC BAA-679 / EGD-e).